Consider the following 59-residue polypeptide: Conotoxin reg3.15 (59 aa).

An N-terminal signal peptide occupies residues 1–15 (RVLLTICLLLFPLTA). Positions 16–44 (IPLGGDQPAERMRNVRSAVQDPRFDSVGW) are excised as a propeptide. Intrachain disulfides connect C45–C59, C46–C55, and C51–C58.

The protein belongs to the conotoxin M superfamily. Expressed by the venom duct.

The protein resides in the secreted. The protein is Conotoxin reg3.15 of Conus regius (Crown cone).